We begin with the raw amino-acid sequence, 136 residues long: S-protein homolog 6 (136 aa).

An N-terminal signal peptide occupies residues 1 to 17 (MFIIIFIVLISLIGCET). N-linked (GlcNAc...) asparagine glycosylation is found at asparagine 76 and asparagine 108.

This sequence belongs to the plant self-incompatibility (S1) protein family.

It localises to the secreted. This chain is S-protein homolog 6, found in Arabidopsis thaliana (Mouse-ear cress).